The following is a 716-amino-acid chain: 1,4-alpha-glucan branching enzyme GlgB (716 aa).

The active-site Nucleophile is the aspartate 398. The active-site Proton donor is the glutamate 451.

This sequence belongs to the glycosyl hydrolase 13 family. GlgB subfamily. In terms of assembly, monomer.

It catalyses the reaction Transfers a segment of a (1-&gt;4)-alpha-D-glucan chain to a primary hydroxy group in a similar glucan chain.. It participates in glycan biosynthesis; glycogen biosynthesis. Catalyzes the formation of the alpha-1,6-glucosidic linkages in glycogen by scission of a 1,4-alpha-linked oligosaccharide from growing alpha-1,4-glucan chains and the subsequent attachment of the oligosaccharide to the alpha-1,6 position. In Nitrobacter hamburgensis (strain DSM 10229 / NCIMB 13809 / X14), this protein is 1,4-alpha-glucan branching enzyme GlgB.